We begin with the raw amino-acid sequence, 446 residues long: Na(+)-translocating NADH-quinone reductase subunit A (446 aa).

It belongs to the NqrA family. As to quaternary structure, composed of six subunits; NqrA, NqrB, NqrC, NqrD, NqrE and NqrF.

It carries out the reaction a ubiquinone + n Na(+)(in) + NADH + H(+) = a ubiquinol + n Na(+)(out) + NAD(+). Its function is as follows. NQR complex catalyzes the reduction of ubiquinone-1 to ubiquinol by two successive reactions, coupled with the transport of Na(+) ions from the cytoplasm to the periplasm. NqrA to NqrE are probably involved in the second step, the conversion of ubisemiquinone to ubiquinol. This Vibrio parahaemolyticus serotype O3:K6 (strain RIMD 2210633) protein is Na(+)-translocating NADH-quinone reductase subunit A.